A 418-amino-acid polypeptide reads, in one-letter code: Cell division protein FtsA (418 aa).

This sequence belongs to the FtsA/MreB family. As to quaternary structure, self-interacts. Interacts with FtsZ.

Its subcellular location is the cell inner membrane. Cell division protein that is involved in the assembly of the Z ring. May serve as a membrane anchor for the Z ring. The chain is Cell division protein FtsA from Buchnera aphidicola subsp. Acyrthosiphon pisum (strain APS) (Acyrthosiphon pisum symbiotic bacterium).